A 385-amino-acid chain; its full sequence is Na(+)/H(+) antiporter NhaA (385 aa).

11 helical membrane-spanning segments follow: residues 9 to 29, 45 to 65, 87 to 107, 114 to 134, 155 to 175, 198 to 218, 220 to 235, 245 to 265, 282 to 302, 312 to 332, and 345 to 365; these read YSAI…NVLD, IFGL…VFFF, IIPG…YLSV, GWPV…AIFG, AGIV…WIIV, TFLI…SVYQ, GIHA…IMLN, ALEP…AAMV, ILLG…IIAL, FFNL…SLLM, and QGVI…IILM.

This sequence belongs to the NhaA Na(+)/H(+) (TC 2.A.33) antiporter family.

Its subcellular location is the cell membrane. It carries out the reaction Na(+)(in) + 2 H(+)(out) = Na(+)(out) + 2 H(+)(in). Functionally, na(+)/H(+) antiporter that extrudes sodium in exchange for external protons. The protein is Na(+)/H(+) antiporter NhaA of Tropheryma whipplei (strain TW08/27) (Whipple's bacillus).